The chain runs to 408 residues: Arginine biosynthesis bifunctional protein ArgJ (408 aa).

Positions 156, 182, 193, 279, 403, and 408 each coordinate substrate. Thr193 functions as the Nucleophile in the catalytic mechanism.

The protein belongs to the ArgJ family. Heterotetramer of two alpha and two beta chains.

It localises to the cytoplasm. It carries out the reaction N(2)-acetyl-L-ornithine + L-glutamate = N-acetyl-L-glutamate + L-ornithine. It catalyses the reaction L-glutamate + acetyl-CoA = N-acetyl-L-glutamate + CoA + H(+). It functions in the pathway amino-acid biosynthesis; L-arginine biosynthesis; L-ornithine and N-acetyl-L-glutamate from L-glutamate and N(2)-acetyl-L-ornithine (cyclic): step 1/1. It participates in amino-acid biosynthesis; L-arginine biosynthesis; N(2)-acetyl-L-ornithine from L-glutamate: step 1/4. Functionally, catalyzes two activities which are involved in the cyclic version of arginine biosynthesis: the synthesis of N-acetylglutamate from glutamate and acetyl-CoA as the acetyl donor, and of ornithine by transacetylation between N(2)-acetylornithine and glutamate. In Bordetella bronchiseptica (strain ATCC BAA-588 / NCTC 13252 / RB50) (Alcaligenes bronchisepticus), this protein is Arginine biosynthesis bifunctional protein ArgJ.